The chain runs to 605 residues: Elongation factor 4 (605 aa).

Positions S9 to A192 constitute a tr-type G domain. Residues D21–T26 and N139–D142 contribute to the GTP site.

This sequence belongs to the TRAFAC class translation factor GTPase superfamily. Classic translation factor GTPase family. LepA subfamily.

Its subcellular location is the cell inner membrane. The catalysed reaction is GTP + H2O = GDP + phosphate + H(+). Its function is as follows. Required for accurate and efficient protein synthesis under certain stress conditions. May act as a fidelity factor of the translation reaction, by catalyzing a one-codon backward translocation of tRNAs on improperly translocated ribosomes. Back-translocation proceeds from a post-translocation (POST) complex to a pre-translocation (PRE) complex, thus giving elongation factor G a second chance to translocate the tRNAs correctly. Binds to ribosomes in a GTP-dependent manner. In Chlorobium phaeovibrioides (strain DSM 265 / 1930) (Prosthecochloris vibrioformis (strain DSM 265)), this protein is Elongation factor 4.